The following is a 213-amino-acid chain: Putative manganese efflux pump MntP (213 aa).

The next 6 helical transmembrane spans lie at isoleucine 3 to alanine 23, alanine 36 to glycine 56, alanine 67 to glutamate 87, leucine 130 to isoleucine 150, isoleucine 152 to isoleucine 172, and isoleucine 187 to isoleucine 207.

It belongs to the MntP (TC 9.B.29) family.

The protein resides in the cell membrane. In terms of biological role, probably functions as a manganese efflux pump. The protein is Putative manganese efflux pump MntP of Clostridium perfringens (strain 13 / Type A).